The following is a 75-amino-acid chain: Protein CYSTEINE-RICH TRANSMEMBRANE MODULE 5 (75 aa).

The tract at residues 1-29 (MSQYSQNQYAGAYPTPPVSTGPYVAPPPL) is disordered. The segment covering 14–29 (PTPPVSTGPYVAPPPL) has biased composition (pro residues). A helical membrane pass occupies residues 52–69 (AADGFLKGCLATMLACCV).

The protein belongs to the CYSTM1 family. As to quaternary structure, heterodimers. Interacts with CYSTM7 and WIH1/CYSTM13. As to expression, mostly expressed in roots, stems, rosette leaves and siliques and, to a lower extent, in flowers and cauline leaves.

It is found in the cell membrane. The protein resides in the nucleus. Functionally, involved in resistance to abiotic stress. This chain is Protein CYSTEINE-RICH TRANSMEMBRANE MODULE 5, found in Arabidopsis thaliana (Mouse-ear cress).